The sequence spans 236 residues: 1-(5-phosphoribosyl)-5-[(5-phosphoribosylamino)methylideneamino] imidazole-4-carboxamide isomerase (236 aa).

Asp-8 serves as the catalytic Proton acceptor. The active-site Proton donor is Asp-129.

Belongs to the HisA/HisF family.

Its subcellular location is the cytoplasm. It carries out the reaction 1-(5-phospho-beta-D-ribosyl)-5-[(5-phospho-beta-D-ribosylamino)methylideneamino]imidazole-4-carboxamide = 5-[(5-phospho-1-deoxy-D-ribulos-1-ylimino)methylamino]-1-(5-phospho-beta-D-ribosyl)imidazole-4-carboxamide. Its pathway is amino-acid biosynthesis; L-histidine biosynthesis; L-histidine from 5-phospho-alpha-D-ribose 1-diphosphate: step 4/9. The sequence is that of 1-(5-phosphoribosyl)-5-[(5-phosphoribosylamino)methylideneamino] imidazole-4-carboxamide isomerase from Ruminiclostridium cellulolyticum (strain ATCC 35319 / DSM 5812 / JCM 6584 / H10) (Clostridium cellulolyticum).